The sequence spans 177 residues: Calcium-binding protein CML38 (177 aa).

A compositionally biased stretch (polar residues) spans 1–11; that stretch reads MKNNTQPQSSF. Residues 1–44 form a disordered region; sequence MKNNTQPQSSFKKLCRKLSPKREDSAGEIQQHNSSNGEDKNREL. 4 EF-hand domains span residues 39-74, 75-110, 111-146, and 147-177; these read DKNR…LGEQ, LSDE…DDEE, EKKM…LGES, and RTTD…LMMR. Ca(2+) is bound by residues Asp-52, Asn-54, Asp-56, Arg-58, Glu-63, Asp-88, Asp-90, Asp-92, Met-94, and Glu-99. Ca(2+) is bound by residues Asp-160, Asn-162, Asp-164, and Glu-171.

As to quaternary structure, binds to ABCG36. Expressed in cotyledons and guard cells of young leaves. In mature root, expressed in the epidermis, trichoblasts, young lateral root and root tip. Expressed from stage 9 to 15 of flower development in anther wall.

Its function is as follows. Potential calcium sensor that binds calcium in vitro. The sequence is that of Calcium-binding protein CML38 from Arabidopsis thaliana (Mouse-ear cress).